The chain runs to 290 residues: Nucleotide-binding protein FN1089 (290 aa).

11 to 18 provides a ligand contact to ATP; that stretch reads GLSGAGKT. 56 to 59 is a GTP binding site; it reads DIRT.

Belongs to the RapZ-like family.

Functionally, displays ATPase and GTPase activities. The sequence is that of Nucleotide-binding protein FN1089 from Fusobacterium nucleatum subsp. nucleatum (strain ATCC 25586 / DSM 15643 / BCRC 10681 / CIP 101130 / JCM 8532 / KCTC 2640 / LMG 13131 / VPI 4355).